The sequence spans 100 residues: Urease subunit gamma (100 aa).

It belongs to the urease gamma subunit family. As to quaternary structure, heterotrimer of UreA (gamma), UreB (beta) and UreC (alpha) subunits. Three heterotrimers associate to form the active enzyme. The apoenzyme interacts with an accessory complex composed of UreD, UreF and UreG, which is required for the assembly of the nickel containing metallocenter of UreC. The UreE protein may also play a direct role as a metallochaperone in nickel transfer to the urease apoprotein.

It is found in the cytoplasm. The enzyme catalyses urea + 2 H2O + H(+) = hydrogencarbonate + 2 NH4(+). Its pathway is nitrogen metabolism; urea degradation; CO(2) and NH(3) from urea (urease route): step 1/1. Its activity is regulated as follows. The apoenzyme can be activated in vitro in the presence of nickel ions and carbon dioxide, which promotes carbamylation of 'Lys-217' of the UreC (alpha) subunit. The polypeptide is Urease subunit gamma (Klebsiella aerogenes (Enterobacter aerogenes)).